The primary structure comprises 331 residues: Tryptophan--tRNA ligase (331 aa).

Residues 10–12 and 18–19 contribute to the ATP site; these read QPS and GN. The short motif at 11 to 19 is the 'HIGH' region element; the sequence is PSGQLTLGN. Asp133 serves as a coordination point for L-tryptophan. ATP-binding positions include 145–147, Val184, and 193–197; these read GED and KMSKS. A 'KMSKS' region motif is present at residues 193–197; the sequence is KMSKS.

It belongs to the class-I aminoacyl-tRNA synthetase family. Homodimer.

It is found in the cytoplasm. The catalysed reaction is tRNA(Trp) + L-tryptophan + ATP = L-tryptophyl-tRNA(Trp) + AMP + diphosphate + H(+). Its function is as follows. Catalyzes the attachment of tryptophan to tRNA(Trp). In Listeria monocytogenes serovar 1/2a (strain ATCC BAA-679 / EGD-e), this protein is Tryptophan--tRNA ligase.